A 172-amino-acid polypeptide reads, in one-letter code: MAESELMHIHSLAEHYLQYVLQVPAFESAPSQACRVLQRVAFSVQKEVEKNLKSYLDDFHVESIDTARIIFNQVMEKEFEDGIINWGRIVTIFAFGGVLLKKLPQEQIALDVCAYKQVSSFVAEFIMNNTGEWIRQNGGWEDGFIKKFEPKSGWLTFLQMTGQIWEMLFLLK.

Positions 77–97 match the BH1 motif; sequence KEFEDGIINWGRIVTIFAFGG. Residues 132 to 147 carry the BH2 motif; it reads EWIRQNGGWEDGFIKK.

Belongs to the Bcl-2 family. In terms of assembly, interacts directly with BCL2L11/BIM and PMAIP1. Interacts directly with BAK1, BID, BMF and BBC3. Interacts with BOP. Interacts with isoform 3, isoform 4 and isoform 5 of ING4. Interacts with UBQLN4. Expressed in hemopoietic tissues, including bone marrow, spleen and thymus.

The protein resides in the cytoplasm. Its function is as follows. Retards apoptosis induced by IL-3 deprivation. May function in the response of hemopoietic cells to external signals and in maintaining endothelial survival during infection. Can inhibit apoptosis induced by serum starvation in the mammary epithelial cell line HC11. This is Bcl-2-related protein A1 (Bcl2a1) from Mus musculus (Mouse).